The chain runs to 132 residues: Auxin-responsive protein SAUR72 (132 aa).

The interval 22-54 is disordered; it reads SDSQRPSRRSESFLRSSVTRRSKKQTSSVPEGH. The segment covering 23 to 33 has biased composition (basic and acidic residues); sequence DSQRPSRRSES.

This sequence belongs to the ARG7 family. As to quaternary structure, interacts with and inhibits PP2C-D subfamily of type 2C phosphatases such as PP2C67/PP2C-D1. As to expression, highly expressed in the steles of roots and hypocotyls.

The protein resides in the cytoplasm. Functionally, provide a mechanistic link between auxin and plasma membrane H(+)-ATPases (PM H(+)-ATPases, e.g. AHA1 and AHA2), and triggers PM H(+)-ATPases activity by promoting phosphorylation of their C-terminal autoinhibitory domain as a result of PP2C-D subfamily of type 2C phosphatases inhibition, thus leading to the acidification of the apoplast and the facilitation of solutes and water uptake to drive cell expansion. Plays a role in the regulation of cell expansion, root meristem patterning and auxin transport. The protein is Auxin-responsive protein SAUR72 of Arabidopsis thaliana (Mouse-ear cress).